Consider the following 258-residue polypeptide: MTFIHPTAIVDPAAKLADDVKVGPWTYIGEGVEIGAGSVIESHVVLKGPTQIGCNNHIYQFSSVGEATPDLKYKGEPTKLIIGDNNIIREGVTLHRGTVQDRGETRIGNNNLLMAYVHVGHDSVVGNHCILVNNAALAGHVIVDDYAILGGFTLVHQFSRIGAYSFTGMGSAVGKDIPAFMMVAGAPAAARSINMEGLKRRGFSKDDIAKLNKSFKLIYRRGLTLEAAIEELTPLAQDCAAIVTLIASLRASKRGIVR.

This sequence belongs to the transferase hexapeptide repeat family. LpxA subfamily. Homotrimer.

It localises to the cytoplasm. It carries out the reaction a (3R)-hydroxyacyl-[ACP] + UDP-N-acetyl-alpha-D-glucosamine = a UDP-3-O-[(3R)-3-hydroxyacyl]-N-acetyl-alpha-D-glucosamine + holo-[ACP]. The protein operates within glycolipid biosynthesis; lipid IV(A) biosynthesis; lipid IV(A) from (3R)-3-hydroxytetradecanoyl-[acyl-carrier-protein] and UDP-N-acetyl-alpha-D-glucosamine: step 1/6. Involved in the biosynthesis of lipid A, a phosphorylated glycolipid that anchors the lipopolysaccharide to the outer membrane of the cell. The polypeptide is Acyl-[acyl-carrier-protein]--UDP-N-acetylglucosamine O-acyltransferase (Saccharophagus degradans (strain 2-40 / ATCC 43961 / DSM 17024)).